We begin with the raw amino-acid sequence, 390 residues long: Putative glutamate--cysteine ligase 2 (390 aa).

The protein belongs to the glutamate--cysteine ligase type 2 family. YbdK subfamily.

It catalyses the reaction L-cysteine + L-glutamate + ATP = gamma-L-glutamyl-L-cysteine + ADP + phosphate + H(+). Its function is as follows. ATP-dependent carboxylate-amine ligase which exhibits weak glutamate--cysteine ligase activity. The protein is Putative glutamate--cysteine ligase 2 of Chloroflexus aurantiacus (strain ATCC 29366 / DSM 635 / J-10-fl).